A 2544-amino-acid polypeptide reads, in one-letter code: MSLPRRSRKRRRSSSGSDTFSGDGDSFVSPQLRCGPVLSPPPGLGRGRRLTGTGTNKRRVSDDQIDQLLLANWGLPKAVLEKYHSFGVRKMFEWQAECLLLGHVLEGKNLVYSAPTSAGKTLVAELLILKRVLETRKKALFILPFVSVAKEKKCYLQSLFQEVGLKVDGYMGSTSPTGQFSSLDIAVCTIERANGLVNRLIEENKMDLLGMVVVDELHMLGDSHRGYLLELLLTKICYVTRKSASHQAESASTLSNAVQIVGMSATLPNLQLVASWLNAELYHTDFRPVPLLESIKIGNSIYDSSMKLVREFQPLLQVKGDEDHIVSLCYETIQDNHSVLIFCPSKKWCEKVADIIAREFYNLHHQPEGLVKSSEFPPVILDQKSLLEVMDQLKRSPSGLDSVLKNTVPWGVAFHHAGLTFEERDIIEGAFRQGFIRVLAATSTLSSGVNLPARRVIIRTPIFSGQPLDILTYKQMVGRAGRKGVDTMGESILVCKNSEKSKGIALLQGSLEPVHSCLQRQGEVTASMIRAILEIIVGGVASTSQDMQTYAACTFLAAAIQEGKQGMQRNQDDAQLGAIDACVTWLLENEFIQVAEPGDGTGGKVYHPTHLGSATLSSSLSPTDTLDIFADLQRAMKGFVLENDLHIVYLVTPVFEDWISIDWYRFFCLWEKLPTSMKRVAELVGVEEGFLARCVKGKVVARTERQHRQMAIHKRFFTSLVLLDLISEIPLKDINQKYGCNRGQIQSLQQSAAVYAGMITVFSNRLGWHNMELLLSQFQKRLTFGIQRELCDLIRVSLLNAQRARFLYASGFLTVADLARADSAEVEVALKNSLPFKSARKAVDEEEEAAEERRSMRTIWVTGKGLSAREAAALIVEEAKMILQQDLIEMGVRWDPKSPLSSSTHSRTSTSEVKEHTFKSQTKSSHKRLASMGRNSIRASGSNDKPSPDAERGIDDCSEHADSLCKFQGNFEPQTPSICTARKRTSLGINKEMLRKSLKEGKPSTKEVLQTFSSEKTRKTALSFSSEQVNNTLPSGRDRKYQKKSWGSSPVRDSGMHRGDLQGQTMCTSALCEDSQKSLEEQNAEFRSPGLFAKHLPSCAKEKCKKPSLPLQRQQACSRRSTESCAAVGHPAAGSSPAAARDRRGLAARETEKGNEALTENGGESQLQDTYPVSQYLEYHSEKHTNTCTRQKTLTEGQAGSSYVARDSNDAAPIKCERMKLNSKDRDSNPCRQALGSYTGRTEALQSTAKLGQAGGQCENLLNSSGVQGKTGAHATNRTEHSHASNPAFCDFGDSLDLDTQSEEIIEQMATENTMQGAKAVVIMEEGSAMQNKCHSTPGDQHVPGAANTDHVDSKKVESVKANTEKNINRGAPVSLIFHTQGENGACFKGNEHSVTDSQLNSFLQGFETQEIVKPIIPLAPQMRTPTGVEEESLPETSLNMSDSILFDSFGEDGFGQGQSPDIKANQPLLSEMTPNHFSNPPHPQEDPVMTPTVSEPQGTQQQGVCLSGESIIFSDIDSAQVIEALDNMAAFHVQENCNSVALKTLEPSDSAVLGNECPQGKLVRGDQNEGSPKPKLTETNQDNSFTWSGASFNLSPELQRILDKVSSPRENEKPKMIHVNLSSFEGNSKESHEREEINSDLGTVQRTSVFPSNEVKNRTEGLESKARHGGASSPLPRKESAAADDNGLIPPTPVPASASKVAFPEILGTSVKRQKASSALQPGESCLFGSPSDNQNQDLSQELRDSLKDYDGSVADTSFFLQSQDGLLLTQASCSSESLAIIDVASDQILFQTFVKEWQCQKRFSISLACEKMTSSMSSKTATIGGKLKQVSLPQEATVEDAGFPVRGCDGAVVVGLAVCWGAKDAYYLSLQKEQKQSEISPSLAPPPLDATLTVKERMECLQSCLQKKSDRERSVVTYDFIQTYKVLLLSCGISLEPSYEDPKVACWLLDPDSKEPTLHSIVTSFLPHELALLEGMETGPGIQSLGLNVNTEHSGRYRASVESVLIFNSMNQLNSLLQKENLHDIFCKVEMPSQYCLALLELNGIGFSTAECESQKHVMQAKLDAIETQAYQLAGHSFSFTSADDIAQVLFLELKLPPNGEMKTQGSKKTLGSTRRGNESGRRMRLGRQFSTSKDILNKLKGLHPLPGLILEWRRISNAITKVVFPLQREKHLNPLLRMERIYPVSQSHTATGRITFTEPNIQNVPRDFEIKMPTLVRESPPSQAPKGRFPMAIGQDKKVYGLHPGHRTQMEEKASDRGVPFSVSMRHAFVPFPGGLILAADYSQLELRILAHLSRDCRLIQVLNTGADVFRSIAAEWKMIEPDAVGDDLRQHAKQICYGIIYGMGAKSLGEQMGIKENDAASYIDSFKSRYKGINHFMRDTVKNCRKNGFVETILGRRRYLPGIKDDNPYHKAHAERQAINTTVQGSAADIVKIATVNIQKQLETFRSTFKSHGHRESMLQNDRTGLLPKRKLKGMFCPMRGGFFILQLHDELLYEVAEEDVVQVAQIVKNEMECAIKLSVKLKVKVKIGASWGELKDFDV.

Residues 1 to 13 (MSLPRRSRKRRRS) are compositionally biased toward basic residues. The disordered stretch occupies residues 1 to 57 (MSLPRRSRKRRRSSSGSDTFSGDGDSFVSPQLRCGPVLSPPPGLGRGRRLTGTGTNK). Low complexity predominate over residues 14–29 (SSGSDTFSGDGDSFVS). ATP-binding positions include Gln95 and 114–121 (APTSAGKT). The region spanning 101–285 (LGHVLEGKNL…WLNAELYHTD (185 aa)) is the Helicase ATP-binding domain. The helicase activity stretch occupies residues 101-551 (LGHVLEGKNL…STSQDMQTYA (451 aa)). The short motif at 215–218 (DELH) is the DEAH box element. Positions 320-551 (GDEDHIVSLC…STSQDMQTYA (232 aa)) constitute a Helicase C-terminal domain. The interaction with RAD51 stretch occupies residues 844–890 (DEEEEAAEERRSMRTIWVTGKGLSAREAAALIVEEAKMILQQDLIEM). A disordered region spans residues 896–955 (PKSPLSSSTHSRTSTSEVKEHTFKSQTKSSHKRLASMGRNSIRASGSNDKPSPDAERGID). Positions 898–911 (SPLSSSTHSRTSTS) are enriched in low complexity. Polar residues predominate over residues 933-945 (GRNSIRASGSNDK). The segment covering 946 to 955 (PSPDAERGID) has biased composition (basic and acidic residues). The residue at position 983 (Lys983) is an N6-acetyllysine. Residues 1022–1034 (LSFSSEQVNNTLP) show a composition bias toward polar residues. 2 disordered regions span residues 1022–1058 (LSFS…GMHR) and 1128–1167 (VGHP…ESQL). Over residues 1128 to 1139 (VGHPAAGSSPAA) the composition is skewed to low complexity. A compositionally biased stretch (basic and acidic residues) spans 1140 to 1155 (ARDRRGLAARETEKGN). Ser1265 carries the phosphoserine modification. 2 disordered regions span residues 1266–1288 (GVQG…SNPA) and 1331–1353 (QNKC…DHVD). Phosphoserine occurs at positions 1438, 1442, 1444, and 1449. Positions 1478 to 1501 (FSNPPHPQEDPVMTPTVSEPQGTQ) are disordered. A compositionally biased stretch (polar residues) spans 1492–1501 (PTVSEPQGTQ). 4 positions are modified to phosphoserine: Ser1511, Ser1519, Ser1585, and Ser1592. A disordered region spans residues 1557-1591 (ECPQGKLVRGDQNEGSPKPKLTETNQDNSFTWSGA). A compositionally biased stretch (polar residues) spans 1578–1591 (TETNQDNSFTWSGA). Basic and acidic residues-rich tracts occupy residues 1606 to 1616 (VSSPRENEKPK) and 1628 to 1638 (NSKESHEREEI). Positions 1606-1697 (VSSPRENEKP…GLIPPTPVPA (92 aa)) are disordered. Over residues 1641–1652 (DLGTVQRTSVFP) the composition is skewed to polar residues. A compositionally biased stretch (basic and acidic residues) spans 1656–1667 (VKNRTEGLESKA). Thr1710 is subject to Phosphothreonine. The tract at residues 2052-2538 (AECESQKHVM…KVKIGASWGE (487 aa)) is DNA polymerase activity. Loop regions lie at residues 2097 to 2132 (KLPP…GRQF) and 2212 to 2276 (EIKM…VPFP). Over residues 2104-2117 (MKTQGSKKTLGSTR) the composition is skewed to polar residues. The tract at residues 2104–2124 (MKTQGSKKTLGSTRRGNESGR) is disordered. The For DNA polymerase activity role is filled by Asp2284. Asp2284 and Tyr2285 together coordinate Mg(2+). Residues 2445 to 2489 (QLETFRSTFKSHGHRESMLQNDRTGLLPKRKLKGMFCPMRGGFFI) form a loop 3 region. Asp2494 serves as a coordination point for Mg(2+).

The protein belongs to the DNA polymerase type-A family. As to quaternary structure, homomultimer; forms homodimers and homotetramers. Interacts with RAD51. Interacts with ORC2 and ORC4. Interacts with RHNO1; interaction takes place during mitosis and promotes POLQ recruitment to DNA damage sites. Interacts (when phosphorylated) with TOPBP1 (via BRCT domains 7 and 8); promoting POLQ recruitment to DNA damage sites. Mg(2+) serves as cofactor. Phosphorylated by PLK1; promoting interaction with TOPBP1 and recruitment to DNA damage sites.

Its subcellular location is the nucleus. The protein resides in the chromosome. The enzyme catalyses DNA(n) + a 2'-deoxyribonucleoside 5'-triphosphate = DNA(n+1) + diphosphate. It carries out the reaction ATP + H2O = ADP + phosphate + H(+). Low-fidelity DNA polymerase with a helicase activity that promotes microhomology-mediated end-joining (MMEJ), an alternative non-homologous end-joining (NHEJ) machinery required to repair double-strand breaks in DNA during mitosis. MMEJ is an error-prone repair pathway that produces deletions of sequences from the strand being repaired and promotes genomic rearrangements, such as telomere fusions, some of them leading to cellular transformation. MMEJ is required during mitosis to repair persistent double-strand breaks that originate in S-phase. Although error-prone, MMEJ protects against chromosomal instability and tumorigenesis. The polymerase acts by binding directly the 2 ends of resected double-strand breaks, allowing microhomologous sequences in the overhangs to form base pairs. It then extends each strand from the base-paired region using the opposing overhang as a template. Requires partially resected DNA containing 2 to 6 base pairs of microhomology to perform MMEJ. The polymerase lacks proofreading activity and is highly promiscuous: unlike most polymerases, promotes extension of ssDNA and partial ssDNA (pssDNA) substrates. When the ends of a break do not contain terminal microhomology must identify embedded complementary sequences through a scanning step. Also acts as a DNA helicase, promoting dissociation of the replication protein A complex (RPA/RP-A), composed of RPA1, RPA2 and RPA3, from resected double-strand breaks to allow their annealing and subsequent joining by MMEJ. Removal of RPA/RP-A complex proteins prevents RAD51 accumulation at resected ends, thereby inhibiting homology-recombination repair (HR) pathway. Also shows RNA-directed DNA polymerase activity to mediate DNA repair in vitro; however this activity needs additional evidence in vivo. May also have lyase activity. Involved in somatic hypermutation of immunoglobulin genes, a process that requires the activity of DNA polymerases to ultimately introduce mutations at both A/T and C/G base pairs. However, POLQ does not play a major role in somatic hypermutation. POLQ-mediated end joining activity is involved in random integration of exogenous DNA hampers. The sequence is that of DNA polymerase theta from Mus musculus (Mouse).